Reading from the N-terminus, the 457-residue chain is Siroheme synthase (457 aa).

The segment at 1–204 is precorrin-2 dehydrogenase /sirohydrochlorin ferrochelatase; the sequence is MDHLPIFCQL…ADEKAVNATT (204 aa). NAD(+)-binding positions include 22 to 23 and 43 to 44; these read DV and LT. Position 128 is a phosphoserine (Ser128). Positions 216–457 are uroporphyrinogen-III C-methyltransferase; it reads GEVVLVGAGP…RDKLNWFSNY (242 aa). Residue Pro225 coordinates S-adenosyl-L-methionine. Catalysis depends on Asp248, which acts as the Proton acceptor. The Proton donor role is filled by Lys270. Residues 301-303, Ile306, 331-332, Met382, and Gly411 contribute to the S-adenosyl-L-methionine site; these read GGD and TA.

In the N-terminal section; belongs to the precorrin-2 dehydrogenase / sirohydrochlorin ferrochelatase family. It in the C-terminal section; belongs to the precorrin methyltransferase family.

It catalyses the reaction uroporphyrinogen III + 2 S-adenosyl-L-methionine = precorrin-2 + 2 S-adenosyl-L-homocysteine + H(+). The enzyme catalyses precorrin-2 + NAD(+) = sirohydrochlorin + NADH + 2 H(+). The catalysed reaction is siroheme + 2 H(+) = sirohydrochlorin + Fe(2+). Its pathway is cofactor biosynthesis; adenosylcobalamin biosynthesis; precorrin-2 from uroporphyrinogen III: step 1/1. It participates in cofactor biosynthesis; adenosylcobalamin biosynthesis; sirohydrochlorin from precorrin-2: step 1/1. It functions in the pathway porphyrin-containing compound metabolism; siroheme biosynthesis; precorrin-2 from uroporphyrinogen III: step 1/1. The protein operates within porphyrin-containing compound metabolism; siroheme biosynthesis; siroheme from sirohydrochlorin: step 1/1. Its pathway is porphyrin-containing compound metabolism; siroheme biosynthesis; sirohydrochlorin from precorrin-2: step 1/1. Functionally, multifunctional enzyme that catalyzes the SAM-dependent methylations of uroporphyrinogen III at position C-2 and C-7 to form precorrin-2 via precorrin-1. Then it catalyzes the NAD-dependent ring dehydrogenation of precorrin-2 to yield sirohydrochlorin. Finally, it catalyzes the ferrochelation of sirohydrochlorin to yield siroheme. The sequence is that of Siroheme synthase from Salmonella choleraesuis (strain SC-B67).